We begin with the raw amino-acid sequence, 1094 residues long: Transport and Golgi organization protein 6 homolog (1094 aa).

Residues 468–488 (LTVLMDSLLPVLGVLFLLYCF) traverse the membrane as a helical segment. At serine 556 the chain carries Phosphoserine. Positions 777 to 795 (EEQQQTSHERPTDVAHSHL) are enriched in basic and acidic residues. The disordered stretch occupies residues 777–834 (EEQQQTSHERPTDVAHSHLEQQQSHETAPQTGLQSNAPIIPQGVNEPSTTTSQKSGSV). Composition is skewed to polar residues over residues 796–813 (EQQQSHETAPQTGLQSNA) and 821–834 (NEPSTTTSQKSGSV). HEAT repeat units follow at residues 873-909 (LEMQEKLLKIFLENLEHEDTFVYLSAIQGVALLSDVY) and 952-988 (SKYREPLIHTFLRGVRDPDGAHRASSLANLGELCQRL).

Belongs to the Tango6 family.

Its subcellular location is the membrane. The chain is Transport and Golgi organization protein 6 homolog (TANGO6) from Homo sapiens (Human).